The chain runs to 294 residues: Acetylglutamate kinase (294 aa).

Substrate contacts are provided by residues 66–67 (GG), Arg-88, and Asn-193.

It belongs to the acetylglutamate kinase family. ArgB subfamily.

It is found in the cytoplasm. It carries out the reaction N-acetyl-L-glutamate + ATP = N-acetyl-L-glutamyl 5-phosphate + ADP. The protein operates within amino-acid biosynthesis; L-arginine biosynthesis; N(2)-acetyl-L-ornithine from L-glutamate: step 2/4. Its function is as follows. Catalyzes the ATP-dependent phosphorylation of N-acetyl-L-glutamate. In Agrobacterium fabrum (strain C58 / ATCC 33970) (Agrobacterium tumefaciens (strain C58)), this protein is Acetylglutamate kinase.